The following is a 99-amino-acid chain: Cystatin (99 aa).

Residues 3–99 (GGLSPRSVSD…EEKLCGFQVW (97 aa)) form the Cystatin domain. A Secondary area of contact motif is present at residues 47–51 (QSVAG). Cys-65 and Cys-81 form a disulfide bridge.

Belongs to the cystatin family. In terms of tissue distribution, expressed by the venom gland.

The protein localises to the secreted. Its function is as follows. Inhibits various C1 cysteine proteases including cathepsin L (Ki is 0.1 nM), papain (Ki is 0.19 nM), cathepsin S (Ki is 1.2 nM), and cathepsin B (Ki is 2.5 nM). This protein has no toxic activity and its function in the venom is unknown. It may play a role as housekeeping or regulatory protein. This is Cystatin from Naja atra (Chinese cobra).